We begin with the raw amino-acid sequence, 697 residues long: Gametogenetin-binding protein 2 (697 aa).

The residue at position 360 (S360) is a Phosphoserine.

Interacts with GGN. Expressed in heart, brain, placenta, lung, liver, skeletal muscle, kidney and pancreas. Expressed more abundantly in heart, pancreas and skeletal muscle.

It localises to the cytoplasmic vesicle. In terms of biological role, may be involved in spermatogenesis. This is Gametogenetin-binding protein 2 (GGNBP2) from Homo sapiens (Human).